We begin with the raw amino-acid sequence, 176 residues long: Shikimate kinase (176 aa).

Residue 14–19 (GAGKSS) coordinates ATP. Ser18 lines the Mg(2+) pocket. Substrate-binding residues include Asp36, Arg60, and Gly82. ATP is bound at residue Arg120. Substrate is bound at residue Arg138.

This sequence belongs to the shikimate kinase family. As to quaternary structure, monomer. Mg(2+) serves as cofactor.

The protein resides in the cytoplasm. It carries out the reaction shikimate + ATP = 3-phosphoshikimate + ADP + H(+). The protein operates within metabolic intermediate biosynthesis; chorismate biosynthesis; chorismate from D-erythrose 4-phosphate and phosphoenolpyruvate: step 5/7. Functionally, catalyzes the specific phosphorylation of the 3-hydroxyl group of shikimic acid using ATP as a cosubstrate. In Dehalococcoides mccartyi (strain ATCC BAA-2266 / KCTC 15142 / 195) (Dehalococcoides ethenogenes (strain 195)), this protein is Shikimate kinase.